The primary structure comprises 404 residues: MKLPIYLDYAATTPVDPRVAEKMMQCLTMDGIFGNPASRSHRYGWQAEEAVDIARNQVAELINADPREIVFTSGATESDNLAIKGVAHFYHKKGKHIITSKTEHKAVLDTCRQLEREGYEVTYLQPEPSGLIPVSMIEAAMREDTILVSIMQVNNEIGVIQDIDAIGELCRSRKIIFHVDAAQSAGKLPIDVQTTKVDLMSISGHKMYGPKGIGALYVSRKPRIRLEAAMHGGGHERGMRSGTLATHQIVGMGEAAAIAKADMEVDNERIRRLRDKLWNGINHIEETYINGDVEKRACGSLNVSFNFVEGESLMMALKDLAVSSGSACTSASLEPSYVLRALGLNDEMAHSSIRFSIGRFTTDEEIDHAIETIKESIGNLREMSPLWEMFKDGIDLDSVQWAHH.

Pyridoxal 5'-phosphate is bound by residues 75-76 (AT), N155, Q183, and 203-205 (SGH). At K206 the chain carries N6-(pyridoxal phosphate)lysine. A pyridoxal 5'-phosphate-binding site is contributed by T243. The active-site Cysteine persulfide intermediate is C328. Residue C328 participates in [2Fe-2S] cluster binding.

The protein belongs to the class-V pyridoxal-phosphate-dependent aminotransferase family. NifS/IscS subfamily. In terms of assembly, homodimer. Forms a heterotetramer with IscU, interacts with other sulfur acceptors. Pyridoxal 5'-phosphate serves as cofactor.

It localises to the cytoplasm. It catalyses the reaction (sulfur carrier)-H + L-cysteine = (sulfur carrier)-SH + L-alanine. Its pathway is cofactor biosynthesis; iron-sulfur cluster biosynthesis. In terms of biological role, master enzyme that delivers sulfur to a number of partners involved in Fe-S cluster assembly, tRNA modification or cofactor biosynthesis. Catalyzes the removal of elemental sulfur atoms from cysteine to produce alanine. Functions as a sulfur delivery protein for Fe-S cluster synthesis onto IscU, an Fe-S scaffold assembly protein, as well as other S acceptor proteins. In Shewanella pealeana (strain ATCC 700345 / ANG-SQ1), this protein is Cysteine desulfurase IscS.